Reading from the N-terminus, the 228-residue chain is ATP-dependent dethiobiotin synthetase BioD (228 aa).

12 to 17 (EIGKTT) is a binding site for ATP. Threonine 16 serves as a coordination point for Mg(2+). The active site involves lysine 37. Serine 41 is a binding site for substrate. Residues aspartate 54, 116 to 119 (EGAG), and 205 to 207 (PRL) each bind ATP. 2 residues coordinate Mg(2+): aspartate 54 and glutamate 116.

This sequence belongs to the dethiobiotin synthetase family. As to quaternary structure, homodimer. The cofactor is Mg(2+).

Its subcellular location is the cytoplasm. The enzyme catalyses (7R,8S)-7,8-diammoniononanoate + CO2 + ATP = (4R,5S)-dethiobiotin + ADP + phosphate + 3 H(+). It functions in the pathway cofactor biosynthesis; biotin biosynthesis; biotin from 7,8-diaminononanoate: step 1/2. Its function is as follows. Catalyzes a mechanistically unusual reaction, the ATP-dependent insertion of CO2 between the N7 and N8 nitrogen atoms of 7,8-diaminopelargonic acid (DAPA, also called 7,8-diammoniononanoate) to form a ureido ring. The chain is ATP-dependent dethiobiotin synthetase BioD from Pseudomonas paraeruginosa (strain DSM 24068 / PA7) (Pseudomonas aeruginosa (strain PA7)).